The sequence spans 121 residues: Small ribosomal subunit protein uS13 (121 aa).

The tract at residues Met89 to Lys121 is disordered.

The protein belongs to the universal ribosomal protein uS13 family. In terms of assembly, part of the 30S ribosomal subunit. Forms a loose heterodimer with protein S19. Forms two bridges to the 50S subunit in the 70S ribosome.

In terms of biological role, located at the top of the head of the 30S subunit, it contacts several helices of the 16S rRNA. In the 70S ribosome it contacts the 23S rRNA (bridge B1a) and protein L5 of the 50S subunit (bridge B1b), connecting the 2 subunits; these bridges are implicated in subunit movement. Contacts the tRNAs in the A and P-sites. The sequence is that of Small ribosomal subunit protein uS13 from Pediococcus pentosaceus (strain ATCC 25745 / CCUG 21536 / LMG 10740 / 183-1w).